We begin with the raw amino-acid sequence, 200 residues long: Inner membrane-spanning protein YciB (200 aa).

6 consecutive transmembrane segments (helical) span residues 1 to 21 (MPPL…FFAN), 37 to 57 (IGAP…IALA), 66 to 86 (LPIM…LTLW), 103 to 123 (LFGG…GYVF), 136 to 156 (KLTL…EIVW), and 167 to 187 (FKVW…MPLI).

This sequence belongs to the YciB family.

Its subcellular location is the cell inner membrane. Functionally, plays a role in cell envelope biogenesis, maintenance of cell envelope integrity and membrane homeostasis. The protein is Inner membrane-spanning protein YciB of Brucella suis biovar 1 (strain 1330).